The chain runs to 423 residues: L-cysteine:1D-myo-inositol 2-amino-2-deoxy-alpha-D-glucopyranoside ligase (423 aa).

Cys43 lines the Zn(2+) pocket. Residues Cys43–Thr46, Thr58, and Asn81–Thr83 each bind L-cysteinyl-5'-AMP. The short motif at Ile45–His55 is the 'HIGH' region element. Positions Glu199–Pro204 match the 'ERGGDP' region motif. An L-cysteinyl-5'-AMP-binding site is contributed by Trp240. Residue Cys244 participates in Zn(2+) binding. Position 262-264 (Gly262–Asp264) interacts with L-cysteinyl-5'-AMP. Position 269 (His269) interacts with Zn(2+). Val295 lines the L-cysteinyl-5'-AMP pocket. Positions Lys301–Ser305 match the 'KMSKS' region motif.

It belongs to the class-I aminoacyl-tRNA synthetase family. MshC subfamily. In terms of assembly, monomer. It depends on Zn(2+) as a cofactor.

It carries out the reaction 1D-myo-inositol 2-amino-2-deoxy-alpha-D-glucopyranoside + L-cysteine + ATP = 1D-myo-inositol 2-(L-cysteinylamino)-2-deoxy-alpha-D-glucopyranoside + AMP + diphosphate + H(+). In terms of biological role, catalyzes the ATP-dependent condensation of GlcN-Ins and L-cysteine to form L-Cys-GlcN-Ins. The polypeptide is L-cysteine:1D-myo-inositol 2-amino-2-deoxy-alpha-D-glucopyranoside ligase (Renibacterium salmoninarum (strain ATCC 33209 / DSM 20767 / JCM 11484 / NBRC 15589 / NCIMB 2235)).